Here is a 186-residue protein sequence, read N- to C-terminus: Lipid A palmitoyltransferase PagP (186 aa).

Positions 1–25 (MNVSKYVAIFFFVFIQLISVGKVFA) are cleaved as a signal peptide. Catalysis depends on residues His58, Asp101, and Ser102.

This sequence belongs to the lipid A palmitoyltransferase family. Homodimer.

Its subcellular location is the cell outer membrane. It catalyses the reaction lipid A (E. coli) + a 1-hexadecanoyl-2-acyl-sn-glycero-3-phosphocholine = hepta-acyl lipid A (E. coli) + a 2-acyl-sn-glycero-3-phosphocholine. The catalysed reaction is lipid IIA + a 1-hexadecanoyl-2-acyl-sn-glycero-3-phosphocholine = lipid IIB + a 2-acyl-sn-glycero-3-phosphocholine. It carries out the reaction lipid IVA (E. coli) + a 1-hexadecanoyl-2-acyl-sn-glycero-3-phosphocholine = lipid IVB (E. coli) + a 2-acyl-sn-glycero-3-phosphocholine. Transfers a palmitate residue from the sn-1 position of a phospholipid to the N-linked hydroxymyristate on the proximal unit of lipid A or its precursors. The polypeptide is Lipid A palmitoyltransferase PagP (Escherichia coli O6:H1 (strain CFT073 / ATCC 700928 / UPEC)).